Here is a 352-residue protein sequence, read N- to C-terminus: MPGAGTFKLFIGNLDEKTQATELRALFEKYGTVVECDVVKNYGFVHMETEQQGRDAIQNLNGYTLNEFAIKVEAAKSRRAPNTPTTKIFVGNLTDKTRAPEVRELFQKYGTVVECDIVRNYGFVHLDCVGDVQDAIKELNGRVVDGQPLKVQVSTSRVRPKPGMGDPEQCYRCGRSGHWSKECPRLYGSAGGGREPPSPLSAGGYRDRMYGRDPYPPPPPPPPFLRDRIMDGFRDYDYYDRRFEDSRDLYERRYQTSRMRDFPPPPISRREPMPLPPTLSGSLRSCSVSRGYDTMFSRRSPPPPRSSNGMSRYGSPTPHGYEDFSRDAFDERMISSRGMRGPSPPGRRYAPY.

2 RRM domains span residues 7 to 77 (FKLF…AAKS) and 86 to 156 (TKIF…VSTS). The CCHC-type zinc-finger motif lies at 168-185 (EQCYRCGRSGHWSKECPR). Disordered regions lie at residues 187–228 (YGSA…LRDR) and 254–352 (YQTS…YAPY). Residues S198 and S201 each carry the phosphoserine modification. Composition is skewed to pro residues over residues 214–224 (PYPPPPPPPPF) and 262–277 (FPPP…PLPP). The span at 279-288 (LSGSLRSCSV) shows a compositional bias: polar residues. Phosphoserine is present on residues S315 and S325. A compositionally biased stretch (basic and acidic residues) spans 320–334 (GYEDFSRDAFDERMI).

As to expression, expressed in the CNS and in CCAP neurons of the ventral nervous system (VNS), which control insect ecdysis.

The protein localises to the cytoplasm. Its subcellular location is the nucleus. Its function is as follows. Essential RNA-binding protein. May be required for circadian repression of eclosion. Also essential for nurse cell dumping during oogenesis, the process whereby the cytoplasmic contents of nurse cells are transferred to the oocyte late in it's development. This is RNA-binding protein lark (lark) from Drosophila melanogaster (Fruit fly).